We begin with the raw amino-acid sequence, 224 residues long: Peptidyl-tRNA hydrolase (224 aa).

Tyr-27 is a tRNA binding site. Catalysis depends on His-32, which acts as the Proton acceptor. 3 residues coordinate tRNA: Tyr-78, Asn-80, and Asn-126. A compositionally biased stretch (low complexity) spans 203–215; the sequence is LSGPSSDLDGSNP. The tract at residues 203-224 is disordered; sequence LSGPSSDLDGSNPAPGHGEASS.

Belongs to the PTH family. As to quaternary structure, monomer.

It localises to the cytoplasm. It catalyses the reaction an N-acyl-L-alpha-aminoacyl-tRNA + H2O = an N-acyl-L-amino acid + a tRNA + H(+). Functionally, hydrolyzes ribosome-free peptidyl-tRNAs (with 1 or more amino acids incorporated), which drop off the ribosome during protein synthesis, or as a result of ribosome stalling. Catalyzes the release of premature peptidyl moieties from peptidyl-tRNA molecules trapped in stalled 50S ribosomal subunits, and thus maintains levels of free tRNAs and 50S ribosomes. The polypeptide is Peptidyl-tRNA hydrolase (Synechococcus sp. (strain JA-2-3B'a(2-13)) (Cyanobacteria bacterium Yellowstone B-Prime)).